The primary structure comprises 586 residues: MATARARAALVFVALLQMAAVVVVRASHVVYPELQSLEAKHVDGKLRTGYHFQPPKHWINDPNGPMYYKGLYHLFYQYNPKGAVWGNIEWAHSVSTDLIDWTALEPGIYPSKTFDEKGCWSGSATVLPSGVPVIMYTGIDPDERQVQNVAYPVNLSDPYLREWYKPDYNPIINPDGGINASAFRDPTTAWYGPDGHWRLLVGSKVNMKGLAVLYRSRDFKKWVKAHHPLHSAHTGMWECPDFFPVAVAGGSRHYRRGVDTAELHDAAVAEEVKYVLKVSLDLTRYEYYTVGWYDHATDRYVPDAAFPDNDYGLRYDYGDFYASKSFYDPAKRRRIVWGWANESDTVPDDRRKGWAGIQAIPRKLWLSADGKQLVQWPVEELKALRAKHVNVTDKVIKKGNYFEVTGFKSVQSDVDMAFAIKDLSKAEEFDPAWRTDAEALCKKLGSDVDGGVGPFGLWALASGDLKERTAVFFRVFKANDSSHVVLMCNDPTRSSYESKIYRPTFAGFVDVDIAKNKQIALRTLIDHSVVESFGARGKTCILTRVYPRKAVGDDAHLFVFNNGESDVKVTNLDAWEMKTPKMNAEE.

The signal sequence occupies residues 1–26; the sequence is MATARARAALVFVALLQMAAVVVVRA. The active site involves D61. N-linked (GlcNAc...) asparagine glycosylation is found at N154, N179, N341, N390, and N479.

It belongs to the glycosyl hydrolase 32 family.

It localises to the secreted. The protein localises to the extracellular space. The protein resides in the apoplast. It is found in the cell wall. It catalyses the reaction Hydrolysis of terminal non-reducing beta-D-fructofuranoside residues in beta-D-fructofuranosides.. This is Beta-fructofuranosidase, insoluble isoenzyme 3 (CIN3) from Oryza sativa subsp. indica (Rice).